Here is a 58-residue protein sequence, read N- to C-terminus: Large ribosomal subunit protein uL30 (58 aa).

It belongs to the universal ribosomal protein uL30 family. As to quaternary structure, part of the 50S ribosomal subunit.

The sequence is that of Large ribosomal subunit protein uL30 from Pseudomonas aeruginosa (strain LESB58).